The sequence spans 549 residues: Cytoplasmic trehalase (549 aa).

Substrate-binding positions include Arg-168, Trp-175–Asp-176, Asn-212, Arg-221–Gln-223, Arg-292–Glu-294, and Gly-324. Residues Asp-326 and Glu-509 each act as proton donor/acceptor in the active site. Glu-525 is a binding site for substrate.

Belongs to the glycosyl hydrolase 37 family. Monomer.

Its subcellular location is the cytoplasm. The catalysed reaction is alpha,alpha-trehalose + H2O = alpha-D-glucose + beta-D-glucose. The protein operates within glycan degradation; trehalose degradation; D-glucose from alpha,alpha-trehalose: step 1/1. Hydrolyzes trehalose to glucose. Could be involved, in cells returning to low osmolarity conditions, in the utilization of the accumulated cytoplasmic trehalose, which was synthesized in response to high osmolarity. The sequence is that of Cytoplasmic trehalase from Escherichia coli O81 (strain ED1a).